A 138-amino-acid chain; its full sequence is uncharacterized protein (138 aa).

This sequence to phage 186 CP81.

This is an uncharacterized protein from Salmonella typhimurium (strain LT2 / SGSC1412 / ATCC 700720).